A 402-amino-acid polypeptide reads, in one-letter code: Type II NADH:quinone oxidoreductase (402 aa).

Residues glycine 12 to alanine 16, asparagine 39 to lysine 40, and valine 83 contribute to the FAD site. Glutamate 172 is an active-site residue. FAD contacts are provided by residues aspartate 302, alanine 319–glutamine 320, and lysine 379.

It belongs to the NADH dehydrogenase family. FAD is required as a cofactor.

Its subcellular location is the cell membrane. It carries out the reaction a quinone + NADH + H(+) = a quinol + NAD(+). Its function is as follows. Alternative, nonproton pumping NADH:quinone oxidoreductase that delivers electrons to the respiratory chain by oxidation of NADH and reduction of quinones, and contributes to the regeneration of NAD(+). The polypeptide is Type II NADH:quinone oxidoreductase (Staphylococcus haemolyticus (strain JCSC1435)).